Here is a 247-residue protein sequence, read N- to C-terminus: MGRKFCVGGNWKMNGDKASIADLCKVLTTGPLNADTEVVVGCPAPYLTLARSQLPDSVCVAAQNCYKVPKGAFTGEISPAMLKDLNIGWVILGHSERRAIFGESDELIADKVAHALAEGLKVIACIGETLQEREAGQTEAVCFRQTKAIADKVKDWSNVVIAYEPVWAIGTGKTASPEQAQEVHAALRKWFTENVSADVSAAIRIQYGGSVTAANCRELAAKPDIDGFLVGGASLKPEFIQIVNARQ.

Asn10 and Lys12 together coordinate substrate. The Electrophile role is filled by His94. Residue Glu164 is the Proton acceptor of the active site.

It belongs to the triosephosphate isomerase family. In terms of assembly, homodimer.

It carries out the reaction D-glyceraldehyde 3-phosphate = dihydroxyacetone phosphate. It functions in the pathway carbohydrate biosynthesis; gluconeogenesis. Its pathway is carbohydrate degradation; glycolysis; D-glyceraldehyde 3-phosphate from glycerone phosphate: step 1/1. The protein is Triosephosphate isomerase (Tpi) of Culex tarsalis (Encephalitis mosquito).